The primary structure comprises 46 residues: uncharacterized protein (46 aa).

This is an uncharacterized protein from Shigella flexneri.